The chain runs to 389 residues: S-adenosylmethionine synthase (389 aa).

H16 contacts ATP. D18 serves as a coordination point for Mg(2+). E44 lines the K(+) pocket. Positions 57 and 101 each coordinate L-methionine. The flexible loop stretch occupies residues 101-111 (QSVDIAQGVNE). ATP is bound by residues 168–170 (DAK), 234–235 (RF), D243, 249–250 (RK), A266, and K270. Residue D243 coordinates L-methionine. K274 lines the L-methionine pocket.

Belongs to the AdoMet synthase family. As to quaternary structure, homotetramer; dimer of dimers. The cofactor is Mg(2+). K(+) is required as a cofactor.

It localises to the cytoplasm. The enzyme catalyses L-methionine + ATP + H2O = S-adenosyl-L-methionine + phosphate + diphosphate. It functions in the pathway amino-acid biosynthesis; S-adenosyl-L-methionine biosynthesis; S-adenosyl-L-methionine from L-methionine: step 1/1. Its function is as follows. Catalyzes the formation of S-adenosylmethionine (AdoMet) from methionine and ATP. The overall synthetic reaction is composed of two sequential steps, AdoMet formation and the subsequent tripolyphosphate hydrolysis which occurs prior to release of AdoMet from the enzyme. This Magnetococcus marinus (strain ATCC BAA-1437 / JCM 17883 / MC-1) protein is S-adenosylmethionine synthase.